We begin with the raw amino-acid sequence, 203 residues long: Small ribosomal subunit protein uS4 (203 aa).

The 66-residue stretch at 93–158 folds into the S4 RNA-binding domain; the sequence is LRLDNVVYRL…QQLVTRFLDL (66 aa).

It belongs to the universal ribosomal protein uS4 family. As to quaternary structure, part of the 30S ribosomal subunit. Contacts protein S5. The interaction surface between S4 and S5 is involved in control of translational fidelity.

One of the primary rRNA binding proteins, it binds directly to 16S rRNA where it nucleates assembly of the body of the 30S subunit. Its function is as follows. With S5 and S12 plays an important role in translational accuracy. The chain is Small ribosomal subunit protein uS4 from Akkermansia muciniphila (strain ATCC BAA-835 / DSM 22959 / JCM 33894 / BCRC 81048 / CCUG 64013 / CIP 107961 / Muc).